Reading from the N-terminus, the 172-residue chain is NADH-ubiquinone oxidoreductase chain 6 (172 aa).

The next 4 helical transmembrane spans lie at 1–21 (MNNY…GLAL), 38–58 (VGCL…VFLI), 86–106 (WLIL…ICVL), and 147–167 (CATW…FIII).

It belongs to the complex I subunit 6 family. In terms of assembly, core subunit of respiratory chain NADH dehydrogenase (Complex I) which is composed of 45 different subunits.

It is found in the mitochondrion inner membrane. The catalysed reaction is a ubiquinone + NADH + 5 H(+)(in) = a ubiquinol + NAD(+) + 4 H(+)(out). Core subunit of the mitochondrial membrane respiratory chain NADH dehydrogenase (Complex I) which catalyzes electron transfer from NADH through the respiratory chain, using ubiquinone as an electron acceptor. Essential for the catalytic activity and assembly of complex I. This Mus musculus (Mouse) protein is NADH-ubiquinone oxidoreductase chain 6 (Mtnd6).